The primary structure comprises 880 residues: Valine--tRNA ligase (880 aa).

A 'HIGH' region motif is present at residues 49–59 (PNVTGKLHLGH). The 'KMSKS' region motif lies at 525-529 (KMSKS). Residue K528 participates in ATP binding. A coiled-coil region spans residues 809–880 (LEGLINIDEE…VEKRIAELKN (72 aa)).

Belongs to the class-I aminoacyl-tRNA synthetase family. ValS type 1 subfamily. As to quaternary structure, monomer.

The protein localises to the cytoplasm. The catalysed reaction is tRNA(Val) + L-valine + ATP = L-valyl-tRNA(Val) + AMP + diphosphate. Functionally, catalyzes the attachment of valine to tRNA(Val). As ValRS can inadvertently accommodate and process structurally similar amino acids such as threonine, to avoid such errors, it has a 'posttransfer' editing activity that hydrolyzes mischarged Thr-tRNA(Val) in a tRNA-dependent manner. This chain is Valine--tRNA ligase, found in Bacillus licheniformis (strain ATCC 14580 / DSM 13 / JCM 2505 / CCUG 7422 / NBRC 12200 / NCIMB 9375 / NCTC 10341 / NRRL NRS-1264 / Gibson 46).